The following is a 357-amino-acid chain: Dynein axonemal assembly factor 10 (357 aa).

4 WD repeats span residues 80–127 (EFTN…IPIW), 132–170 (AHQG…NSAN), 184–223 (EQTN…IQST), and 277–321 (EPNQ…IDKV).

As to quaternary structure, interacts with PIH1D1; the interaction associates DNAAF10 with the R2TP complex. Interacts with several dynein axonemal assembly factors.

The protein localises to the dynein axonemal particle. Key assembly factor specifically required for the stability of axonemal dynein heavy chains in cytoplasm. This Dictyostelium discoideum (Social amoeba) protein is Dynein axonemal assembly factor 10 (dnaaf10).